The chain runs to 419 residues: Tol-Pal system protein TolB (419 aa).

Residues 1 to 17 (MRFIGLVLLLLSVKLFG) form the signal peptide.

Belongs to the TolB family. In terms of assembly, the Tol-Pal system is composed of five core proteins: the inner membrane proteins TolA, TolQ and TolR, the periplasmic protein TolB and the outer membrane protein Pal. They form a network linking the inner and outer membranes and the peptidoglycan layer.

It localises to the periplasm. Part of the Tol-Pal system, which plays a role in outer membrane invagination during cell division and is important for maintaining outer membrane integrity. This is Tol-Pal system protein TolB from Helicobacter hepaticus (strain ATCC 51449 / 3B1).